Consider the following 299-residue polypeptide: Protoheme IX farnesyltransferase (299 aa).

9 helical membrane passes run 25-45 (VVVL…RAGV), 47-67 (WTVL…AAAV), 95-115 (LAAL…LLTF), 119-139 (LAAW…TGFL), 147-167 (IVIG…AVSG), 173-193 (PLLL…ALAI), 218-238 (LHIL…YAIH), 243-263 (LYLL…WALY), and 279-299 (IRYL…PLTL).

Belongs to the UbiA prenyltransferase family. Protoheme IX farnesyltransferase subfamily.

It is found in the cell inner membrane. It catalyses the reaction heme b + (2E,6E)-farnesyl diphosphate + H2O = Fe(II)-heme o + diphosphate. The protein operates within porphyrin-containing compound metabolism; heme O biosynthesis; heme O from protoheme: step 1/1. Its function is as follows. Converts heme B (protoheme IX) to heme O by substitution of the vinyl group on carbon 2 of heme B porphyrin ring with a hydroxyethyl farnesyl side group. The chain is Protoheme IX farnesyltransferase from Azotobacter vinelandii (strain DJ / ATCC BAA-1303).